We begin with the raw amino-acid sequence, 242 residues long: UPF0309 protein BMEA_B0892 (242 aa).

Residues 30–214 enclose the SIS domain; it reads AADLIAAAAR…ARLVGEGDAP (185 aa).

It belongs to the UPF0309 family.

The polypeptide is UPF0309 protein BMEA_B0892 (Brucella melitensis biotype 2 (strain ATCC 23457)).